The sequence spans 277 residues: Large ribosomal subunit protein uL2c (277 aa).

Disordered regions lie at residues 36-56 (NKHS…HRGG) and 225-259 (MNSV…GSKS).

The protein belongs to the universal ribosomal protein uL2 family. As to quaternary structure, part of the 50S ribosomal subunit.

It is found in the plastid. It localises to the chloroplast. This Psilotum nudum (Whisk fern) protein is Large ribosomal subunit protein uL2c (rpl2).